A 173-amino-acid chain; its full sequence is Large ribosomal subunit protein uL10 (173 aa).

The protein belongs to the universal ribosomal protein uL10 family. As to quaternary structure, part of the ribosomal stalk of the 50S ribosomal subunit. The N-terminus interacts with L11 and the large rRNA to form the base of the stalk. The C-terminus forms an elongated spine to which L12 dimers bind in a sequential fashion forming a multimeric L10(L12)X complex.

In terms of biological role, forms part of the ribosomal stalk, playing a central role in the interaction of the ribosome with GTP-bound translation factors. This chain is Large ribosomal subunit protein uL10, found in Corynebacterium aurimucosum (strain ATCC 700975 / DSM 44827 / CIP 107346 / CN-1) (Corynebacterium nigricans).